A 371-amino-acid polypeptide reads, in one-letter code: MATLGCAPKDDGEGKDEGGSDRGDGDPKPKGKKEVEAHTRREADERAVRIPIPEVLQQRLADDCYYINRRRRLVRLPCQTNVGAILECYVRHFSASALASGDRRPQPQRAAPERSVGLCREMADGLRITFDHALPLVLLYPQEQAQYEMVTSSTFFFPTEERASDAGRSQEAPWPGPSPPQPSESQAMAGPTAPKRRRVETDAARAPRRSTRHSTHCHWQAEDRASPQAKRSVPKLFPHLQKTPVHSTALSPIALTPGKEGSAMFAGFEGTTEEINEILSWKLVPDNYPPGHQPPPPSYIYGAQHLLRLFVKLPEILGKMSFSEKNLKALLKHLDLFLRFLAEYQADFFLESAYVSACEAHYSSKNPRTIC.

Disordered stretches follow at residues 1–44 (MATL…READ) and 160–229 (EERA…SPQA). The span at 8 to 44 (PKDDGEGKDEGGSDRGDGDPKPKGKKEVEAHTRREAD) shows a compositional bias: basic and acidic residues. Residues 44–367 (DERAVRIPIP…CEAHYSSKNP (324 aa)) enclose the MRG domain. A compositionally biased stretch (basic residues) spans 206–216 (APRRSTRHSTH).

It is found in the nucleus. Its function is as follows. Probable non-catalytic component of the MSL histone acetyltransferase complex, a multiprotein complex that mediates the majority of histone H4 acetylation at 'Lys-16' (H4K16ac), an epigenetic mark that prevents chromatin compaction. The polypeptide is MSL complex subunit 3B (Rattus norvegicus (Rat)).